The primary structure comprises 383 residues: Opsin Rh3 (383 aa).

Topologically, residues 1–57 (MESGNVSSSLFGNVSTALRPEARLSAETRLLGWNVPPEELRHIPEHWLTYPEPPESM) are extracellular. Asn13 is a glycosylation site (N-linked (GlcNAc...) asparagine). The helical transmembrane segment at 58-82 (NYLLGTLYIFFTLMSMLGNGLVIWV) threads the bilayer. Topologically, residues 83 to 94 (FSAAKSLRTPSN) are cytoplasmic. Residues 95–119 (ILVINLAFCDFMMMVKTPIFIYNSF) traverse the membrane as a helical segment. Over 120-133 (HQGYALGHLGCQIF) the chain is Extracellular. Cys130 and Cys207 form a disulfide bridge. The helical transmembrane segment at 134–153 (GIIGSYTGIAAGATNAFIAY) threads the bilayer. The Cytoplasmic segment spans residues 154–171 (DRFNVITRPMEGKMTHGK). A helical transmembrane segment spans residues 172–196 (AIAMIIFIYMYATPWVVACYTETWG). Residues 197–220 (RFVPEGYLTSCTFDYLTDNFDTRL) lie on the Extracellular side of the membrane. A helical membrane pass occupies residues 221–248 (FVACIFFFSFVCPTTMITYYYSQIVGHV). Residues 249 to 284 (FSHEKALRDQAKKMNVESLRSNVDKNKETAEIRIAK) lie on the Cytoplasmic side of the membrane. The helical transmembrane segment at 285–308 (AAITICFLFFCSWTPYGVMSLIGA) threads the bilayer. Residues 309–316 (FGDKTLLT) lie on the Extracellular side of the membrane. A helical membrane pass occupies residues 317 to 341 (PGATMIPACACKMVACIDPFVYAIS). Lys328 is subject to N6-(retinylidene)lysine. Topologically, residues 342 to 383 (HPRYRMELQKRCPWLALNEKAPESSAVASTSTTQEPQQTTAA) are cytoplasmic. Residues 362–383 (APESSAVASTSTTQEPQQTTAA) form a disordered region. The span at 369–383 (ASTSTTQEPQQTTAA) shows a compositional bias: low complexity.

Belongs to the G-protein coupled receptor 1 family. Opsin subfamily. In terms of processing, phosphorylated on some or all of the serine and threonine residues present in the C-terminal region.

It localises to the membrane. Visual pigments are the light-absorbing molecules that mediate vision. They consist of an apoprotein, opsin, covalently linked to cis-retinal. The chain is Opsin Rh3 (Rh3) from Drosophila melanogaster (Fruit fly).